A 1873-amino-acid chain; its full sequence is Voltage-dependent L-type calcium channel subunit alpha-1S (1873 aa).

A disordered region spans residues 1-23 (MEPSSPQDEGLRKKQPKKPLPEV). At 1 to 51 (MEPSSPQDEGLRKKQPKKPLPEVLPRPPRALFCLTLQNPLRKACISIVEWK) the chain is on the cytoplasmic side. Residues 38–337 (NPLRKACISI…LVLGVLSGEF (300 aa)) form an I repeat. A helical membrane pass occupies residues 52–70 (PFETIILLTIFANCVALAV). The Extracellular segment spans residues 71 to 85 (YLPMPEDDNNSLNLG). Asn-79 is a glycosylation site (N-linked (GlcNAc...) asparagine). The chain crosses the membrane as a helical span at residues 86–106 (LEKLEYFFLTVFSIEAAMKII). Residues 107 to 115 (AYGFLFHQD) lie on the Cytoplasmic side of the membrane. Residues 116–136 (AYLRSGWNVLDFIIVFLGVFT) traverse the membrane as a helical segment. Residues 137-160 (AILEQVNVIQSNTAPMSSKGAGLD) are Extracellular-facing. A helical transmembrane segment spans residues 161 to 179 (VKALRAFRVLRPLRLVSGV). At 180 to 196 (PSLQVVLNSIFKAMLPL) the chain is on the cytoplasmic side. Residues 197–218 (FHIALLVLFMVIIYAIIGLELF) form a helical membrane-spanning segment. The Extracellular portion of the chain corresponds to 219–279 (KGKMHKTCYY…HGITHFDNFG (61 aa)). 2 disulfide bridges follow: Cys-226–Cys-254 and Cys-245–Cys-261. Asn-257 carries an N-linked (GlcNAc...) asparagine glycan. The pore-forming intramembrane region spans 280 to 301 (FSMLTVYQCITMEGWTDVLYWV). The short motif at 290–293 (TMEG) is the Selectivity filter of repeat I element. Position 292 (Glu-292) interacts with Ca(2+). Over 302–309 (NDAIGNEW) the chain is Extracellular. Residues 310 to 330 (PWIYFVTLILLGSFFILNLVL) traverse the membrane as a helical segment. The Cytoplasmic segment spans residues 331–432 (GVLSGEFTKE…WKCHDLVKSR (102 aa)). Residues 357–374 (QQLEEDLRGYMSWITQGE) are binding to the beta subunit. Phosphoserine occurs at positions 393 and 397. Residues 418 to 664 (NRVFRWKCHD…VFLAIAVDNL (247 aa)) form an II repeat. A helical membrane pass occupies residues 433–451 (VFYWLVILIVALNTLSIAS). The Extracellular portion of the chain corresponds to 452-462 (EHHNQPLWLTH). The chain crosses the membrane as a helical span at residues 463–483 (LQDIANRVLLSLFTIEMLLKM). At 484–494 (YGLGLRQYFMS) the chain is on the cytoplasmic side. Residues 495 to 514 (IFNRFDCFVVCSGILELLLV) traverse the membrane as a helical segment. The Extracellular segment spans residues 515-523 (ESGAMTPLG). The helical transmembrane segment at 524–542 (ISVLRCIRLLRLFKITKYW) threads the bilayer. Topologically, residues 543-561 (TSLSNLVASLLNSIRSIAS) are cytoplasmic. Residues 562–581 (LLLLLFLFIIIFALLGMQLF) form a helical membrane-spanning segment. Topologically, residues 582–601 (GGRYDFEDTEVRRSNFDNFP) are extracellular. Positions 602 to 623 (QALISVFQVLTGEDWNSVMYNG) form an intramembrane region, pore-forming. Positions 612 to 615 (TGED) match the Selectivity filter of repeat II motif. Ca(2+) is bound at residue Glu-614. Residues 624-633 (IMAYGGPSYP) lie on the Extracellular side of the membrane. The chain crosses the membrane as a helical span at residues 634 to 653 (GVLVCIYFIILFVCGNYILL). The Cytoplasmic segment spans residues 654–799 (NVFLAIAVDN…VLCHRIVNAT (146 aa)). 2 disordered regions span residues 673–717 (AQKA…IPTT) and 731–757 (EVKDPYPSADFPGDDEEDEPEIPVSPR). Position 687 is a phosphoserine; by PKA (Ser-687). The segment covering 690 to 711 (LPDKTEEEKSVMAKKLEQKPKG) has biased composition (basic and acidic residues). The segment covering 742 to 751 (PGDDEEDEPE) has biased composition (acidic residues). The interaction with STAC, STAC2 and STAC3 (via SH3 domains) stretch occupies residues 747–760 (EDEPEIPVSPRPRP). An III repeat occupies 786–1068 (NKVRVLCHRI…IFVGFVIVTF (283 aa)). Residues 800 to 818 (WFTNFILLFILLSSAALAA) form a helical membrane-spanning segment. Topologically, residues 819-830 (EDPIRAESVRNQ) are extracellular. The chain crosses the membrane as a helical span at residues 831-850 (ILGYFDIAFTSVFTVEIVLK). Residues 851 to 866 (MTTYGAFLHKGSFCRN) lie on the Cytoplasmic side of the membrane. Residues 867–885 (YFNILDLLVVAVSLISMGL) traverse the membrane as a helical segment. Residues 886-892 (ESSTISV) are Extracellular-facing. The chain crosses the membrane as a helical span at residues 893-911 (VKILRVLRVLRPLRAINRA). The Cytoplasmic portion of the chain corresponds to 912-930 (KGLKHVVQCVFVAIRTIGN). Residues 931-950 (IVLVTTLLQFMFACIGVQLF) form a helical membrane-spanning segment. Over 951–1000 (KGKFFSCNDLSKMTEEECRGYYYVYKDGDPTQMELRPRQWIHNDFHFDNV) the chain is Extracellular. An intrachain disulfide couples Cys-957 to Cys-968. The interval 988–1077 (RQWIHNDFHF…FQEQGETEYK (90 aa)) is dihydropyridine binding. The pore-forming intramembrane region spans 1001–1021 (LSAMMSLFTVSTFEGWPQLLY). A Selectivity filter of repeat III motif is present at residues 1012-1015 (TFEG). Glu-1014 is a Ca(2+) binding site. At 1022-1038 (RAIDSNEEDMGPVYNNR) the chain is on the extracellular side. The helical transmembrane segment at 1039–1060 (VEMAIFFIIYIILIAFFMMNIF) threads the bilayer. Residues 1061–1118 (VGFVIVTFQEQGETEYKNCELDKNQRQCVQYALKARPLRCYIPKNPYQYQVWYVVTSS) lie on the Cytoplasmic side of the membrane. The stretch at 1105–1384 (NPYQYQVWYV…LFVAVIMDNF (280 aa)) is one IV repeat. Residues 1119–1140 (YFEYLMFALIMLNTICLGMQHY) form a helical membrane-spanning segment. Topologically, residues 1141–1148 (HQSEEMNH) are extracellular. A helical membrane pass occupies residues 1149-1170 (ISDILNVAFTIIFTLEMILKLL). The Cytoplasmic portion of the chain corresponds to 1171 to 1180 (AFKARGYFGD). A helical membrane pass occupies residues 1181 to 1200 (PWNVFDFLIVIGSIIDVILS). At 1201 to 1231 (EIDTFLASSGGLYCLGGGCGNVDPDESARIS) the chain is on the extracellular side. Residues 1232-1250 (SAFFRLFRVMRLIKLLSRA) form a helical membrane-spanning segment. Topologically, residues 1251-1268 (EGVRTLLWTFIKSFQALP) are cytoplasmic. Residues 1269–1289 (YVALLIVMLFFIYAVIGMQMF) form a helical membrane-spanning segment. The Extracellular portion of the chain corresponds to 1290–1311 (GKIALVDGTQINRNNNFQTFPQ). An intramembrane region (pore-forming) is located at residues 1312–1330 (AVLLLFRCATGEAWQEILL). The short motif at 1321 to 1324 (TGEA) is the Selectivity filter of repeat IV element. The Extracellular segment spans residues 1331–1356 (ACSYGKLCDPESDYAPGEEYTCGTNF). The interval 1337 to 1403 (LCDPESDYAP…LGPHHLDEFK (67 aa)) is dihydropyridine binding. The cysteines at positions 1338 and 1352 are disulfide-linked. A phenylalkylamine binding region spans residues 1349–1391 (EYTCGTNFAYYYFISFYMLCAFLIINLFVAVIMDNFDYLTRDW). Residues 1357 to 1381 (AYYYFISFYMLCAFLIINLFVAVIM) traverse the membrane as a helical segment. The Cytoplasmic segment spans residues 1382–1873 (DNFDYLTRDW…SQETLIPPRP (492 aa)). The interval 1522–1542 (KFYATFLIQEHFRKFMKRQEE) is interaction with calmodulin. Phosphoserine; by PKA and CAMK2 is present on Ser-1575. Position 1579 is a phosphothreonine; by CK2 (Thr-1579). At Ser-1617 the chain carries Phosphoserine; by PKA. Disordered stretches follow at residues 1689–1782 (EFPG…RPAP) and 1841–1873 (GMASVPGSLSRRSSLGSLDQVQGSQETLIPPRP). The span at 1847–1858 (GSLSRRSSLGSL) shows a compositional bias: low complexity.

Belongs to the calcium channel alpha-1 subunit (TC 1.A.1.11) family. CACNA1S subfamily. In terms of assembly, component of a calcium channel complex consisting of a pore-forming alpha subunit (CACNA1S) and the ancillary subunits CACNB1 or CACNB2, CACNG1 and CACNA2D1. The channel complex contains alpha, beta, gamma and delta subunits in a 1:1:1:1 ratio, i.e. it contains either CACNB1 or CACNB2. CACNA1S channel activity is modulated by the auxiliary subunits (CACNB1 or CACNB2, CACNG1 and CACNA2D1). Interacts with DYSF and JSRP1. Interacts with RYR1. Interacts with STAC, STAC2 and STAC3 (via their SH3 domains). Interaction with STAC3 promotes expression at the cell membrane. Interaction with STAC2 promotes expression at the cell membrane, but with much lower efficiency than STAC3. Interaction with STAC1 leads to very low levels expression at the cell membrane, much less than the levels observed upon interaction with STAC3 and STAC2. Interacts with CALM. In terms of processing, the alpha-1S subunit is found in two isoforms in the skeletal muscle: a minor form of 212 kDa containing the complete amino acid sequence, and a major form of 190 kDa derived from the full-length form by post-translational proteolysis close to Phe-1690. Phosphorylated. Phosphorylation by PKA activates the calcium channel. Both the minor and major forms are phosphorylated in vitro by PKA. Phosphorylation at Ser-1575 is involved in beta-adrenergic-mediated regulation of the channel. In terms of tissue distribution, detected in skeletal muscle T-tubules (at protein level).

It is found in the cell membrane. Its subcellular location is the sarcolemma. The protein resides in the T-tubule. The enzyme catalyses Ca(2+)(in) = Ca(2+)(out). Channel activity is blocked by dihydropyridines (DHP), phenylalkylamines, and by benzothiazepines. Pore-forming, alpha-1S subunit of the voltage-gated calcium channel that gives rise to L-type calcium currents in skeletal muscle. Calcium channels containing the alpha-1S subunit play an important role in excitation-contraction coupling in skeletal muscle via their interaction with RYR1, which triggers Ca(2+) release from the sarcplasmic reticulum and ultimately results in muscle contraction. Long-lasting (L-type) calcium channels belong to the 'high-voltage activated' (HVA) group. This is Voltage-dependent L-type calcium channel subunit alpha-1S (CACNA1S) from Oryctolagus cuniculus (Rabbit).